The primary structure comprises 78 residues: Exodeoxyribonuclease 7 small subunit (78 aa).

It belongs to the XseB family. In terms of assembly, heterooligomer composed of large and small subunits.

The protein resides in the cytoplasm. It carries out the reaction Exonucleolytic cleavage in either 5'- to 3'- or 3'- to 5'-direction to yield nucleoside 5'-phosphates.. In terms of biological role, bidirectionally degrades single-stranded DNA into large acid-insoluble oligonucleotides, which are then degraded further into small acid-soluble oligonucleotides. This Finegoldia magna (strain ATCC 29328 / DSM 20472 / WAL 2508) (Peptostreptococcus magnus) protein is Exodeoxyribonuclease 7 small subunit.